A 396-amino-acid polypeptide reads, in one-letter code: Subtilisin-like protease 5 (396 aa).

Residues 1–20 (MTGFFTILSFSLAALSVTNA) form the signal peptide. A propeptide spanning residues 21 to 116 (AQILSVPKGA…VEPDAIISQH (96 aa)) is cleaved from the precursor. Positions 37–113 (YIVVMKDDTS…VAFVEPDAII (77 aa)) constitute an Inhibitor I9 domain. The N-linked (GlcNAc...) asparagine glycan is linked to Asn63. Positions 125–396 (PWGLSRLSNR…TRLLYNGSGR (272 aa)) constitute a Peptidase S8 domain. Catalysis depends on charge relay system residues Asp156 and His187. Asn230 and Asn248 each carry an N-linked (GlcNAc...) asparagine glycan. The active-site Charge relay system is Ser342. Residues 377–389 (TIRNPGPDTTTRL) are compositionally biased toward polar residues. Residues 377-396 (TIRNPGPDTTTRLLYNGSGR) are disordered. Asn392 carries an N-linked (GlcNAc...) asparagine glycan.

It belongs to the peptidase S8 family.

The protein resides in the secreted. Secreted subtilisin-like serine protease with keratinolytic activity that contributes to pathogenicity. This is Subtilisin-like protease 5 (SUB5) from Arthroderma benhamiae (Trichophyton mentagrophytes).